The sequence spans 638 residues: 1-deoxy-D-xylulose-5-phosphate synthase (638 aa).

Residues His79 and 120–122 each bind thiamine diphosphate; that span reads GHS. Asp151 lines the Mg(2+) pocket. Thiamine diphosphate-binding positions include 152–153, Asn182, Tyr291, and Glu373; that span reads GA. Asn182 lines the Mg(2+) pocket.

Belongs to the transketolase family. DXPS subfamily. As to quaternary structure, homodimer. Mg(2+) serves as cofactor. The cofactor is thiamine diphosphate.

It catalyses the reaction D-glyceraldehyde 3-phosphate + pyruvate + H(+) = 1-deoxy-D-xylulose 5-phosphate + CO2. It participates in metabolic intermediate biosynthesis; 1-deoxy-D-xylulose 5-phosphate biosynthesis; 1-deoxy-D-xylulose 5-phosphate from D-glyceraldehyde 3-phosphate and pyruvate: step 1/1. Catalyzes the acyloin condensation reaction between C atoms 2 and 3 of pyruvate and glyceraldehyde 3-phosphate to yield 1-deoxy-D-xylulose-5-phosphate (DXP). This is 1-deoxy-D-xylulose-5-phosphate synthase from Xanthomonas euvesicatoria pv. vesicatoria (strain 85-10) (Xanthomonas campestris pv. vesicatoria).